Here is an 85-residue protein sequence, read N- to C-terminus: uncharacterized protein (85 aa).

2 helical membrane passes run 13–35 and 59–81; these read KWLA…FQPL and EGIV…HLLL.

It localises to the cell membrane. This is an uncharacterized protein from Archaeoglobus fulgidus (strain ATCC 49558 / DSM 4304 / JCM 9628 / NBRC 100126 / VC-16).